Here is a 464-residue protein sequence, read N- to C-terminus: 3-isopropylmalate dehydratase large subunit (464 aa).

Positions 337, 397, and 400 each coordinate [4Fe-4S] cluster.

The protein belongs to the aconitase/IPM isomerase family. LeuC type 1 subfamily. Heterodimer of LeuC and LeuD. [4Fe-4S] cluster is required as a cofactor.

The enzyme catalyses (2R,3S)-3-isopropylmalate = (2S)-2-isopropylmalate. It functions in the pathway amino-acid biosynthesis; L-leucine biosynthesis; L-leucine from 3-methyl-2-oxobutanoate: step 2/4. Its function is as follows. Catalyzes the isomerization between 2-isopropylmalate and 3-isopropylmalate, via the formation of 2-isopropylmaleate. The protein is 3-isopropylmalate dehydratase large subunit of Bacillus cereus (strain AH820).